Here is a 524-residue protein sequence, read N- to C-terminus: Inosine-5'-monophosphate dehydrogenase (524 aa).

CBS domains follow at residues 121-180 (FILD…NTPV) and 184-242 (MTPR…PLAS). Residues 280 to 282 (DSS) and 330 to 332 (GMG) each bind NAD(+). K(+) is bound by residues glycine 332 and glycine 334. An IMP-binding site is contributed by serine 335. Cysteine 337 is a K(+) binding site. Cysteine 337 acts as the Thioimidate intermediate in catalysis. Residues 370 to 372 (DGG), 393 to 394 (GG), and 417 to 421 (YRGMG) each bind IMP. Arginine 439 acts as the Proton acceptor in catalysis. Glutamine 451 contributes to the IMP binding site. The K(+) site is built by glutamate 510 and glycine 511.

It belongs to the IMPDH/GMPR family. In terms of assembly, homotetramer. K(+) serves as cofactor.

It is found in the cytoplasm. The catalysed reaction is IMP + NAD(+) + H2O = XMP + NADH + H(+). It functions in the pathway purine metabolism; XMP biosynthesis via de novo pathway; XMP from IMP: step 1/1. Mycophenolic acid (MPA) is a non-competitive inhibitor that prevents formation of the closed enzyme conformation by binding to the same site as the amobile flap. In contrast, mizoribine monophosphate (MZP) is a competitive inhibitor that induces the closed conformation. MPA is a potent inhibitor of mammalian IMPDHs but a poor inhibitor of the bacterial enzymes. MZP is a more potent inhibitor of bacterial IMPDH. Catalyzes the conversion of inosine 5'-phosphate (IMP) to xanthosine 5'-phosphate (XMP), the first committed and rate-limiting step in the de novo synthesis of guanine nucleotides, and therefore plays an important role in the regulation of cell growth. This Schizosaccharomyces pombe (strain 972 / ATCC 24843) (Fission yeast) protein is Inosine-5'-monophosphate dehydrogenase (gua1).